Reading from the N-terminus, the 432-residue chain is Glutamate-1-semialdehyde 2,1-aminomutase (432 aa).

The residue at position 272 (lysine 272) is an N6-(pyridoxal phosphate)lysine.

This sequence belongs to the class-III pyridoxal-phosphate-dependent aminotransferase family. HemL subfamily. As to quaternary structure, homodimer. The cofactor is pyridoxal 5'-phosphate.

Its subcellular location is the cytoplasm. The enzyme catalyses (S)-4-amino-5-oxopentanoate = 5-aminolevulinate. Its pathway is porphyrin-containing compound metabolism; protoporphyrin-IX biosynthesis; 5-aminolevulinate from L-glutamyl-tRNA(Glu): step 2/2. The protein operates within porphyrin-containing compound metabolism; chlorophyll biosynthesis. The sequence is that of Glutamate-1-semialdehyde 2,1-aminomutase from Cyanothece sp. (strain PCC 7425 / ATCC 29141).